Consider the following 79-residue polypeptide: UPF0180 protein BCAH820_1484 (79 aa).

This sequence belongs to the UPF0180 family.

The polypeptide is UPF0180 protein BCAH820_1484 (Bacillus cereus (strain AH820)).